The chain runs to 391 residues: Nutrient and stress factor 1 (391 aa).

Residues Met-1–Ala-27 are compositionally biased toward polar residues. The segment at Met-1–Arg-37 is disordered. 2 consecutive C2H2-type zinc fingers follow at residues Phe-41–His-66 and Phe-72–His-95. The tract at residues Arg-91 to Met-149 is disordered. Positions Ala-96–Lys-109 are enriched in basic residues. The segment covering Pro-110 to Ser-134 has biased composition (low complexity). Residues Ser-162 and Ser-163 each carry the phosphoserine modification. Residues Ala-326–Asp-374 form a disordered region. Positions Asn-332–Asn-344 are enriched in low complexity. Residues Lys-353 to Thr-369 are compositionally biased toward basic and acidic residues.

The protein resides in the nucleus. Functionally, transcription factor that participates in the transcriptional activation of glucose-repressed genes during exponential growth in non-fermentable carbon conditions. Also involved in salt-stress response. This chain is Nutrient and stress factor 1 (USV1), found in Saccharomyces cerevisiae (strain ATCC 204508 / S288c) (Baker's yeast).